A 373-amino-acid chain; its full sequence is Flagellar P-ring protein 1 (373 aa).

A signal peptide spans 1–25 (MKPINTFFSSFLLALTLGLPATSQA).

It belongs to the FlgI family. The basal body constitutes a major portion of the flagellar organelle and consists of four rings (L,P,S, and M) mounted on a central rod.

The protein localises to the periplasm. It is found in the bacterial flagellum basal body. In terms of biological role, assembles around the rod to form the L-ring and probably protects the motor/basal body from shearing forces during rotation. This is Flagellar P-ring protein 1 from Vibrio parahaemolyticus serotype O3:K6 (strain RIMD 2210633).